Reading from the N-terminus, the 71-residue chain is Heat-stable enterotoxin B (71 aa).

The first 19 residues, 1–19 (MKKIILALVLMLFSFCTLG), serve as a signal peptide directing secretion. The propeptide occupies 20–52 (QETASMHLDDTLSAPIAAEINRKACDTQTPSPS). 3 cysteine pairs are disulfide-bonded: C59/C64, C60/C68, and C63/C71.

It belongs to the heat-stable enterotoxin family.

The protein resides in the secreted. In terms of biological role, toxin which activates the particulate form of guanylate cyclase and increases cyclic GMP levels within the host intestinal epithelial cells. Could play an important role in pathogenesis. This is Heat-stable enterotoxin B (ystB) from Yersinia enterocolitica.